The sequence spans 398 residues: Phosphoglycerate kinase (398 aa).

Substrate is bound by residues 21–23 (DFN), R36, 59–62 (HLGR), R119, and R157. ATP-binding positions include K208, G296, E327, and 354–357 (GGDS).

It belongs to the phosphoglycerate kinase family. In terms of assembly, monomer.

The protein localises to the cytoplasm. The catalysed reaction is (2R)-3-phosphoglycerate + ATP = (2R)-3-phospho-glyceroyl phosphate + ADP. The protein operates within carbohydrate degradation; glycolysis; pyruvate from D-glyceraldehyde 3-phosphate: step 2/5. The polypeptide is Phosphoglycerate kinase (Streptococcus pneumoniae serotype 2 (strain D39 / NCTC 7466)).